A 219-amino-acid polypeptide reads, in one-letter code: Large ribosomal subunit protein uL16 (219 aa).

The protein belongs to the universal ribosomal protein uL16 family. In terms of assembly, component of the large ribosomal subunit. Mature ribosomes consist of a small (40S) and a large (60S) subunit. The 40S subunit contains about 33 different proteins and 1 molecule of RNA (18S). The 60S subunit contains about 49 different proteins and 3 molecules of RNA (28S, 5.8S and 5S).

The polypeptide is Large ribosomal subunit protein uL16 (RpL10) (Bombyx mandarina (Wild silk moth)).